Consider the following 510-residue polypeptide: NAD(P)H-quinone oxidoreductase subunit 2 A, chloroplastic (510 aa).

The next 13 membrane-spanning stretches (helical) occupy residues 24–44 (LLLFDGSLIFPECILIFGLIL), 57–77 (IPWLYFISSTSLVMSITALLF), 99–119 (IFQFLILLCSTLCIPLSVEYI), 124–144 (MAITEFLLFVLTATLGGMFLC), 149–169 (LITIFVAPECFSLCSYLLSGY), 183–203 (YLLMGGASSSILVHGFSWLYG), 227–247 (PGISIALIFITVGIGFKLSPA), 295–315 (WHLLLEILAILSMILGNLIAI), 323–343 (MLAYSSIGQIGYVIIGIIVGD), 354–374 (YMLFYISMNLGTFACIVLFGL), 395–415 (ALSLALCLLSLGGLPPLAGFF), 418–438 (LYLFWCGWQAGLYFLVLIGLL), and 484–504 (MIVCVIASTIPGISMNPIIAI).

It belongs to the complex I subunit 2 family. NDH is composed of at least 16 different subunits, 5 of which are encoded in the nucleus.

It localises to the plastid. The protein resides in the chloroplast thylakoid membrane. The enzyme catalyses a plastoquinone + NADH + (n+1) H(+)(in) = a plastoquinol + NAD(+) + n H(+)(out). It catalyses the reaction a plastoquinone + NADPH + (n+1) H(+)(in) = a plastoquinol + NADP(+) + n H(+)(out). Its function is as follows. NDH shuttles electrons from NAD(P)H:plastoquinone, via FMN and iron-sulfur (Fe-S) centers, to quinones in the photosynthetic chain and possibly in a chloroplast respiratory chain. The immediate electron acceptor for the enzyme in this species is believed to be plastoquinone. Couples the redox reaction to proton translocation, and thus conserves the redox energy in a proton gradient. The polypeptide is NAD(P)H-quinone oxidoreductase subunit 2 A, chloroplastic (Panax ginseng (Korean ginseng)).